A 508-amino-acid chain; its full sequence is Polyamine oxidase FMS1 (508 aa).

Belongs to the flavin monoamine oxidase family. FAD serves as cofactor.

It catalyses the reaction spermine + O2 + H2O = 3-aminopropanal + spermidine + H2O2. It carries out the reaction spermidine + O2 + H2O = 3-aminopropanal + putrescine + H2O2. The enzyme catalyses N(1)-acetylspermine + O2 + H2O = 3-acetamidopropanal + spermidine + H2O2. The catalysed reaction is N(1)-acetylspermidine + O2 + H2O = 3-acetamidopropanal + putrescine + H2O2. It catalyses the reaction N(8)-acetylspermidine + O2 + H2O = 4-acetamidobutanal + propane-1,3-diamine + H2O2. In terms of biological role, involved in the production of beta-alanine, a precursor of pantothenic acid. Multicopy suppressor of fenpropimorph resistance. This chain is Polyamine oxidase FMS1 (FMS1), found in Saccharomyces cerevisiae (strain ATCC 204508 / S288c) (Baker's yeast).